The sequence spans 310 residues: Protein translocase subunit SecF (310 aa).

The next 6 membrane-spanning stretches (helical) occupy residues Phe18 to Gly38, Gln135 to Phe155, Ile162 to Ala182, Ile188 to Leu208, Ile240 to Val260, and Ile267 to Ile287.

The protein belongs to the SecD/SecF family. SecF subfamily. Forms a complex with SecD. Part of the essential Sec protein translocation apparatus which comprises SecA, SecYEG and auxiliary proteins SecDF. Other proteins may also be involved.

It localises to the cell inner membrane. Its function is as follows. Part of the Sec protein translocase complex. Interacts with the SecYEG preprotein conducting channel. SecDF uses the proton motive force (PMF) to complete protein translocation after the ATP-dependent function of SecA. The sequence is that of Protein translocase subunit SecF from Endomicrobium trichonymphae.